The chain runs to 122 residues: Small ribosomal subunit protein uS13 (122 aa).

A disordered region spans residues N95 to K122.

The protein belongs to the universal ribosomal protein uS13 family. As to quaternary structure, part of the 30S ribosomal subunit. Forms a loose heterodimer with protein S19. Forms two bridges to the 50S subunit in the 70S ribosome.

Located at the top of the head of the 30S subunit, it contacts several helices of the 16S rRNA. In the 70S ribosome it contacts the 23S rRNA (bridge B1a) and protein L5 of the 50S subunit (bridge B1b), connecting the 2 subunits; these bridges are implicated in subunit movement. Contacts the tRNAs in the A and P-sites. This chain is Small ribosomal subunit protein uS13, found in Methylobacterium nodulans (strain LMG 21967 / CNCM I-2342 / ORS 2060).